Here is a 302-residue protein sequence, read N- to C-terminus: Recombination-associated protein RdgC (302 aa).

Belongs to the RdgC family.

It localises to the cytoplasm. Its subcellular location is the nucleoid. In terms of biological role, may be involved in recombination. The polypeptide is Recombination-associated protein RdgC (Actinobacillus pleuropneumoniae serotype 3 (strain JL03)).